A 444-amino-acid polypeptide reads, in one-letter code: Methylenetetrahydrofolate--tRNA-(uracil-5-)-methyltransferase TrmFO (444 aa).

Residue 10–15 participates in FAD binding; it reads GAGLAG.

The protein belongs to the MnmG family. TrmFO subfamily. FAD is required as a cofactor.

The protein localises to the cytoplasm. The catalysed reaction is uridine(54) in tRNA + (6R)-5,10-methylene-5,6,7,8-tetrahydrofolate + NADH + H(+) = 5-methyluridine(54) in tRNA + (6S)-5,6,7,8-tetrahydrofolate + NAD(+). It catalyses the reaction uridine(54) in tRNA + (6R)-5,10-methylene-5,6,7,8-tetrahydrofolate + NADPH + H(+) = 5-methyluridine(54) in tRNA + (6S)-5,6,7,8-tetrahydrofolate + NADP(+). Functionally, catalyzes the folate-dependent formation of 5-methyl-uridine at position 54 (M-5-U54) in all tRNAs. The protein is Methylenetetrahydrofolate--tRNA-(uracil-5-)-methyltransferase TrmFO of Streptococcus agalactiae serotype III (strain NEM316).